We begin with the raw amino-acid sequence, 340 residues long: GTP 3',8-cyclase (340 aa).

The Radical SAM core domain occupies 20-246 (RFERQYVYLR…PKALSDGPAK (227 aa)). R29 contacts GTP. C36 and C40 together coordinate [4Fe-4S] cluster. Y42 provides a ligand contact to S-adenosyl-L-methionine. Residue C43 coordinates [4Fe-4S] cluster. A GTP-binding site is contributed by R79. An S-adenosyl-L-methionine-binding site is contributed by G83. Position 110 (T110) interacts with GTP. S134 contacts S-adenosyl-L-methionine. K171 lines the GTP pocket. Position 205 (M205) interacts with S-adenosyl-L-methionine. C268 and C271 together coordinate [4Fe-4S] cluster. A GTP-binding site is contributed by 273–275 (RLR). C285 provides a ligand contact to [4Fe-4S] cluster.

This sequence belongs to the radical SAM superfamily. MoaA family. In terms of assembly, monomer and homodimer. Requires [4Fe-4S] cluster as cofactor.

It carries out the reaction GTP + AH2 + S-adenosyl-L-methionine = (8S)-3',8-cyclo-7,8-dihydroguanosine 5'-triphosphate + 5'-deoxyadenosine + L-methionine + A + H(+). Its pathway is cofactor biosynthesis; molybdopterin biosynthesis. Functionally, catalyzes the cyclization of GTP to (8S)-3',8-cyclo-7,8-dihydroguanosine 5'-triphosphate. The sequence is that of GTP 3',8-cyclase from Actinobacillus pleuropneumoniae serotype 5b (strain L20).